Reading from the N-terminus, the 1172-residue chain is Lysylphosphatidylglycerol biosynthesis bifunctional protein LysX (1172 aa).

Positions 1-34 (MGLHLTVPGLRRDGRGVQSNSHDTSSKTTADISR) are disordered. A phosphatidylglycerol lysyltransferase region spans residues 1–663 (MGLHLTVPGL…LLHHDGSAPD (663 aa)). Over residues 17-31 (VQSNSHDTSSKTTAD) the composition is skewed to polar residues. Transmembrane regions (helical) follow at residues 80–100 (VPAA…LASV), 122–142 (FPDT…ALTA), 146–166 (IAWL…AAEI), 177–197 (FGEN…VLGY), 214–234 (AVWL…VELF), 272–292 (AIFG…LFLS), and 612–632 (VIPR…LPFS). The tract at residues 664 to 1172 (VSGLRQVGLT…TLPFPLAKPH (509 aa)) is lysine--tRNA ligase. Residues 726 to 804 (VSVSGRIMRI…SLIVSGWRLI (79 aa)) constitute a DNA-binding region (OB). Positions 1084 and 1091 each coordinate Mg(2+).

The protein in the N-terminal section; belongs to the LPG synthetase family. In the C-terminal section; belongs to the class-II aminoacyl-tRNA synthetase family. The cofactor is Mg(2+).

The protein resides in the cell membrane. It carries out the reaction tRNA(Lys) + L-lysine + ATP = L-lysyl-tRNA(Lys) + AMP + diphosphate. The catalysed reaction is L-lysyl-tRNA(Lys) + a 1,2-diacyl-sn-glycero-3-phospho-(1'-sn-glycerol) = a 1,2-diacyl-sn-glycero-3-phospho-1'-(3'-O-L-lysyl)-sn-glycerol + tRNA(Lys). Functionally, catalyzes the production of L-lysyl-tRNA(Lys)transfer and the transfer of a lysyl group from L-lysyl-tRNA(Lys) to membrane-bound phosphatidylglycerol (PG), which produces lysylphosphatidylglycerol (LPG), one of the components of the bacterial membrane with a positive net charge. LPG synthesis contributes to the resistance to cationic antimicrobial peptides (CAMPs) and likely protects M.tuberculosis against the CAMPs produced by competiting microorganisms (bacteriocins). In fact, the modification of anionic phosphatidylglycerol with positively charged L-lysine results in repulsion of the peptides. The chain is Lysylphosphatidylglycerol biosynthesis bifunctional protein LysX (lysX) from Mycobacterium bovis (strain BCG / Pasteur 1173P2).